The primary structure comprises 285 residues: Protein HEXIM1 (285 aa).

Disordered stretches follow at residues 1–56 (MSEV…QNPG) and 132–196 (LMED…LQKD). Residues 23–36 (GGWHHPVEREEHPV) show a composition bias toward basic and acidic residues. The segment covering 168-180 (TDDDLEEEEDEAG) has biased composition (acidic residues). Residues 213 to 284 (SKQDLIKEYL…QEGKQVAADS (72 aa)) are a coiled coil.

The protein belongs to the HEXIM family. Homooligomer and heterooligomer. Core component of the 7SK RNP complex.

Its subcellular location is the nucleus. It is found in the cytoplasm. In terms of biological role, transcriptional regulator which functions as a general RNA polymerase II transcription inhibitor. Core component of the 7SK RNP complex: in cooperation with 7SK snRNA sequesters P-TEFb in a large inactive 7SK snRNP complex preventing RNA polymerase II phosphorylation and subsequent transcriptional elongation. Plays a role in the regulation of DNA virus-mediated innate immune response by assembling into the HDP-RNP complex, a complex that serves as a platform for IRF3 phosphorylation and subsequent innate immune response activation through the cGAS-STING pathway. The polypeptide is Protein HEXIM1 (hexim1) (Xenopus laevis (African clawed frog)).